The chain runs to 65 residues: Large ribosomal subunit protein bL28 (65 aa).

Residues 1–26 (MARRDDLTNKGPMSGNKRSHALNATK) are disordered. Residues 17-26 (KRSHALNATK) show a composition bias toward basic residues.

The protein belongs to the bacterial ribosomal protein bL28 family.

This Mycoplasma mobile (strain ATCC 43663 / 163K / NCTC 11711) (Mesomycoplasma mobile) protein is Large ribosomal subunit protein bL28.